Reading from the N-terminus, the 406-residue chain is Succinylornithine transaminase (406 aa).

Position 252 is an N6-(pyridoxal phosphate)lysine (Lys252).

It belongs to the class-III pyridoxal-phosphate-dependent aminotransferase family. AstC subfamily. The cofactor is pyridoxal 5'-phosphate.

The enzyme catalyses N(2)-succinyl-L-ornithine + 2-oxoglutarate = N-succinyl-L-glutamate 5-semialdehyde + L-glutamate. It participates in amino-acid degradation; L-arginine degradation via AST pathway; L-glutamate and succinate from L-arginine: step 3/5. Catalyzes the transamination of N(2)-succinylornithine and alpha-ketoglutarate into N(2)-succinylglutamate semialdehyde and glutamate. Can also act as an acetylornithine aminotransferase. The protein is Succinylornithine transaminase of Escherichia fergusonii (strain ATCC 35469 / DSM 13698 / CCUG 18766 / IAM 14443 / JCM 21226 / LMG 7866 / NBRC 102419 / NCTC 12128 / CDC 0568-73).